The following is a 408-amino-acid chain: F-box A protein 155 (408 aa).

Positions 1 to 22 (MSDRGSDQSSSSSDSAQHIPPK) are disordered.

This sequence belongs to the FTH family.

The protein is F-box A protein 155 (fbxa-155) of Caenorhabditis elegans.